A 145-amino-acid chain; its full sequence is MTDIIRQLEAEQAAKIEEKRKLPDFQPGDTVRVQVRVTEGTRTRVQAYEGVCIARSGAGLNENFTVRKISYGEGVERVFPVYSPIVEGVELVRRGKVRRAKLYYLRGLTGKAARIAEKKDNRTKAEREADKAAAAKAEAAKAAAE.

This sequence belongs to the bacterial ribosomal protein bL19 family.

Its function is as follows. This protein is located at the 30S-50S ribosomal subunit interface and may play a role in the structure and function of the aminoacyl-tRNA binding site. This chain is Large ribosomal subunit protein bL19, found in Brucella anthropi (strain ATCC 49188 / DSM 6882 / CCUG 24695 / JCM 21032 / LMG 3331 / NBRC 15819 / NCTC 12168 / Alc 37) (Ochrobactrum anthropi).